Reading from the N-terminus, the 96-residue chain is SPbeta prophage-derived uncharacterized protein YosV (96 aa).

In Bacillus subtilis (strain 168), this protein is SPbeta prophage-derived uncharacterized protein YosV (yosV).